The following is a 276-amino-acid chain: MQEEWLFINTHKNNPYYNMAMDEALLNLVSQGALPPVIRFYGWAPKTLSIGYFQKLEKEIDLDKVNAGGYGLVRRATGGRGVLHDKELTYSVIVPESHPMMPESVTAAYKVISTGLLEGFKNLGFQAEFSVPRTKEDRERLKDPRSSVCFDASSWYELVVEGKKIAGSAQTRQKGVILQHGSILQSIDVDELFDLFIFSSERLKERMKRSFYSKAVSIADLTDEEITIAMMEEAFYEGFEKGLDIKLKPFEVTAEIEQEVSVLIEKYRSEEWLKRR.

Residues 32–247 enclose the BPL/LPL catalytic domain; that stretch reads GALPPVIRFY…GFEKGLDIKL (216 aa). The Acyl-thioester intermediate role is filled by Cys-149.

The protein belongs to the octanoyltransferase LipM family. Monomer.

It carries out the reaction octanoyl-[ACP] + L-lysyl-[protein] = N(6)-octanoyl-L-lysyl-[protein] + holo-[ACP] + H(+). It functions in the pathway protein modification; protein lipoylation via endogenous pathway; protein N(6)-(lipoyl)lysine from octanoyl-[acyl-carrier-protein]. Its function is as follows. Catalyzes the transfer of endogenously produced octanoic acid from octanoyl-acyl-carrier-protein onto the lipoyl domain of GcvH, an intermediate carrier during protein lipoylation. In Macrococcus caseolyticus (strain JCSC5402) (Macrococcoides caseolyticum), this protein is Octanoyltransferase LipM.